Reading from the N-terminus, the 74-residue chain is MTNVYSLDGLLVFALLFVCTCAYFRKVPRLRSWLLSEKKGVWGVFYKAAVIGSRLHLAVSISCIAMAFYVLFIK.

The N-terminal stretch at Met-1–Ala-22 is a signal peptide. Residues Tyr-23 to Gly-52 lie on the Extracellular side of the membrane. Residues Ser-53–Ile-73 traverse the membrane as a helical segment. A topological domain (cytoplasmic) is located at residue Lys-74.

Belongs to the KISH family.

Its subcellular location is the golgi apparatus membrane. Involved in the early part of the secretory pathway. The chain is Protein kish-B (tmem167b) from Xenopus laevis (African clawed frog).